The primary structure comprises 243 residues: Myrosinase MB2 (243 aa).

N-linked (GlcNAc...) asparagine glycosylation occurs at asparagine 30. Tyrosine 51 contributes to the substrate binding site. Catalysis depends on glutamate 125, which acts as the Nucleophile. Residues tryptophan 173 and 180–181 each bind substrate; that span reads EF. N-linked (GlcNAc...) asparagine glycosylation occurs at asparagine 216.

The protein belongs to the glycosyl hydrolase 1 family. Homodimer. In terms of tissue distribution, in vacuoles called myrosin grains of a certain class of cells, myrosin cells, distributed in the cotyledons and the axis of the embryo as well as in different organs of the growing plant.

The protein resides in the vacuole. The catalysed reaction is a thioglucoside + H2O = a sugar + a thiol.. Its function is as follows. Degradation of glucosinolates (glucose residue linked by a thioglucoside bound to an amino acid derivative) to glucose, sulfate and any of the products: thiocyanates, isothiocyanates, nitriles, epithionitriles or oxazolidine-2-thiones. The protein is Myrosinase MB2 of Sinapis alba (White mustard).